The following is a 186-amino-acid chain: Nicotinamide-nucleotide adenylyltransferase (186 aa).

The protein belongs to the archaeal NMN adenylyltransferase family.

The protein resides in the cytoplasm. The enzyme catalyses beta-nicotinamide D-ribonucleotide + ATP + H(+) = diphosphate + NAD(+). It participates in cofactor biosynthesis; NAD(+) biosynthesis; NAD(+) from nicotinamide D-ribonucleotide: step 1/1. This chain is Nicotinamide-nucleotide adenylyltransferase, found in Pyrococcus abyssi (strain GE5 / Orsay).